Consider the following 361-residue polypeptide: Queuine tRNA-ribosyltransferase (361 aa).

The active-site Proton acceptor is the aspartate 92. Substrate contacts are provided by residues 92–96 (DSGGF), aspartate 146, glutamine 189, and glycine 216. The segment at 247–253 (GVGKPAD) is RNA binding. The active-site Nucleophile is the aspartate 266. The tract at residues 271–275 (TRAGR) is RNA binding; important for wobble base 34 recognition. Residues cysteine 304, cysteine 306, cysteine 309, and histidine 335 each contribute to the Zn(2+) site.

The protein belongs to the queuine tRNA-ribosyltransferase family. As to quaternary structure, homodimer. Within each dimer, one monomer is responsible for RNA recognition and catalysis, while the other monomer binds to the replacement base PreQ1. Zn(2+) is required as a cofactor.

It catalyses the reaction 7-aminomethyl-7-carbaguanine + guanosine(34) in tRNA = 7-aminomethyl-7-carbaguanosine(34) in tRNA + guanine. It participates in tRNA modification; tRNA-queuosine biosynthesis. Functionally, catalyzes the base-exchange of a guanine (G) residue with the queuine precursor 7-aminomethyl-7-deazaguanine (PreQ1) at position 34 (anticodon wobble position) in tRNAs with GU(N) anticodons (tRNA-Asp, -Asn, -His and -Tyr). Catalysis occurs through a double-displacement mechanism. The nucleophile active site attacks the C1' of nucleotide 34 to detach the guanine base from the RNA, forming a covalent enzyme-RNA intermediate. The proton acceptor active site deprotonates the incoming PreQ1, allowing a nucleophilic attack on the C1' of the ribose to form the product. After dissociation, two additional enzymatic reactions on the tRNA convert PreQ1 to queuine (Q), resulting in the hypermodified nucleoside queuosine (7-(((4,5-cis-dihydroxy-2-cyclopenten-1-yl)amino)methyl)-7-deazaguanosine). This Rickettsia massiliae (strain Mtu5) protein is Queuine tRNA-ribosyltransferase.